Reading from the N-terminus, the 168-residue chain is tRNA-splicing endonuclease subunit Sen15 (168 aa).

The disordered stretch occupies residues 1–32; the sequence is MEERSDSEPTPGCSGPGPAPVRDGGGAHTWAP. Phosphoserine is present on residues Ser-7 and Ser-165.

The protein belongs to the SEN15 family. In terms of assembly, homodimer. tRNA splicing endonuclease is a heterotetramer composed of TSEN2, TSEN15, TSEN34/LENG5 and TSEN54. tRNA splicing endonuclease complex also contains proteins of the pre-mRNA 3' end processing machinery such as CLP1, CPSF1, CPSF4 and CSTF2.

The protein localises to the nucleus. Its subcellular location is the nucleolus. Its function is as follows. Non-catalytic subunit of the tRNA-splicing endonuclease complex, a complex responsible for identification and cleavage of the splice sites in pre-tRNA. It cleaves pre-tRNA at the 5' and 3' splice sites to release the intron. The products are an intron and two tRNA half-molecules bearing 2',3' cyclic phosphate and 5'-OH termini. There are no conserved sequences at the splice sites, but the intron is invariably located at the same site in the gene, placing the splice sites an invariant distance from the constant structural features of the tRNA body. The tRNA splicing endonuclease is also involved in mRNA processing via its association with pre-mRNA 3'-end processing factors, establishing a link between pre-tRNA splicing and pre-mRNA 3'-end formation, suggesting that the endonuclease subunits function in multiple RNA-processing events. In Mus musculus (Mouse), this protein is tRNA-splicing endonuclease subunit Sen15 (Tsen15).